The chain runs to 119 residues: DNA-directed RNA polymerase subunit omega (119 aa).

The protein belongs to the RNA polymerase subunit omega family. In terms of assembly, the RNAP catalytic core consists of 2 alpha, 1 beta, 1 beta' and 1 omega subunit. When a sigma factor is associated with the core the holoenzyme is formed, which can initiate transcription.

The enzyme catalyses RNA(n) + a ribonucleoside 5'-triphosphate = RNA(n+1) + diphosphate. Its function is as follows. Promotes RNA polymerase assembly. Latches the N- and C-terminal regions of the beta' subunit thereby facilitating its interaction with the beta and alpha subunits. The protein is DNA-directed RNA polymerase subunit omega (rpoZ) of Caulobacter vibrioides (strain ATCC 19089 / CIP 103742 / CB 15) (Caulobacter crescentus).